Reading from the N-terminus, the 160-residue chain is Anaerobic nitrite reductase AHB1 (160 aa).

One can recognise a Globin domain in the interval 8–157 (VFTEEQEALV…LVAAIKAEMN (150 aa)). Residues 41-45 (EIAPT) carry the Homodimerization motif. Heme b is bound by residues Ser-51, Lys-65, His-69, Arg-99, Ser-103, and His-104. Residues 111–123 (DEHFEVAKYALLE) carry the Homodimerization motif.

It belongs to the plant globin family. Homodimer. It depends on heme b as a cofactor. In terms of tissue distribution, expressed in roots and rosette leaves.

Its subcellular location is the cytoplasm. The protein localises to the nucleus. The catalysed reaction is Fe(III)-heme b-[protein] + nitric oxide + H2O = Fe(II)-heme b-[protein] + nitrite + 2 H(+). Functionally, phytoglobin that reduces nitrite to nitric oxide (NO) under anoxic conditions (e.g. during flooding or in waterlogged soil). May not function as an oxygen storage or transport protein. Has an unusually high affinity for O(2) through an hexacoordinate heme iron because of a very low dissociation constant. The protein is Anaerobic nitrite reductase AHB1 of Arabidopsis thaliana (Mouse-ear cress).